The primary structure comprises 531 residues: Peptide chain release factor 3 (531 aa).

The tr-type G domain occupies 10 to 278 (ARRRTFAIIS…DFVEHAPGPL (269 aa)). GTP-binding positions include 19–26 (SHPDAGKT), 87–91 (DTPGH), and 141–144 (NKLD).

Belongs to the TRAFAC class translation factor GTPase superfamily. Classic translation factor GTPase family. PrfC subfamily.

Its subcellular location is the cytoplasm. In terms of biological role, increases the formation of ribosomal termination complexes and stimulates activities of RF-1 and RF-2. It binds guanine nucleotides and has strong preference for UGA stop codons. It may interact directly with the ribosome. The stimulation of RF-1 and RF-2 is significantly reduced by GTP and GDP, but not by GMP. The chain is Peptide chain release factor 3 from Thioalkalivibrio sulfidiphilus (strain HL-EbGR7).